Consider the following 132-residue polypeptide: Large ribosomal subunit protein bL17 (132 aa).

Belongs to the bacterial ribosomal protein bL17 family. In terms of assembly, part of the 50S ribosomal subunit. Contacts protein L32.

This Leptothrix cholodnii (strain ATCC 51168 / LMG 8142 / SP-6) (Leptothrix discophora (strain SP-6)) protein is Large ribosomal subunit protein bL17.